Reading from the N-terminus, the 215-residue chain is Octanoyltransferase (215 aa).

One can recognise a BPL/LPL catalytic domain in the interval 31 to 206 (PESQDEVWLV…QLVRHLDYAE (176 aa)). Residues 70-77 (RGGQVTYH), 137-139 (SLG), and 150-152 (GLA) each bind substrate. The Acyl-thioester intermediate role is filled by Cys-168.

Belongs to the LipB family.

The protein resides in the cytoplasm. It carries out the reaction octanoyl-[ACP] + L-lysyl-[protein] = N(6)-octanoyl-L-lysyl-[protein] + holo-[ACP] + H(+). The protein operates within protein modification; protein lipoylation via endogenous pathway; protein N(6)-(lipoyl)lysine from octanoyl-[acyl-carrier-protein]: step 1/2. Functionally, catalyzes the transfer of endogenously produced octanoic acid from octanoyl-acyl-carrier-protein onto the lipoyl domains of lipoate-dependent enzymes. Lipoyl-ACP can also act as a substrate although octanoyl-ACP is likely to be the physiological substrate. The sequence is that of Octanoyltransferase from Pseudomonas entomophila (strain L48).